The chain runs to 287 residues: Melatonin receptor type 1B-A (287 aa).

Residues 1–28 (MPENVSLIRNRTEVGQGRAWGSGAGARP) lie on the Extracellular side of the membrane. N-linked (GlcNAc...) asparagine glycans are attached at residues Asn4 and Asn10. Residues 29–49 (AWVVMVLAGVLIFTSVVDVLG) form a helical membrane-spanning segment. Topologically, residues 50–69 (NVLVIISVLRNRKLRNAGNA) are cytoplasmic. A helical transmembrane segment spans residues 70-90 (FVVSLAFADLLVVCYPYPLVL). At 91–107 (HAMLHAGWLPGEMECKV) the chain is on the extracellular side. Cys105 and Cys182 form a disulfide bridge. The chain crosses the membrane as a helical span at residues 108 to 128 (SGFLMGASVIGSIFNITAIAI). Topologically, residues 129-149 (NRYCFICQANTYEKIYGRAGT) are cytoplasmic. A helical membrane pass occupies residues 150–170 (LVLLTLVWVLTAIAILPNLSL). Residues 171 to 192 (GSLTYDPRVYSCTFSQTTSAGY) are Extracellular-facing. The chain crosses the membrane as a helical span at residues 193–213 (TIAVVTVHFLLPIAVVTFCYL). Over 214 to 245 (RIWVLVLRVRRRVTTDVRPRLRPSELRHFLTM) the chain is Cytoplasmic. The helical transmembrane segment at 246–266 (FVVFVLFAVCWAPLNLIGLAV) threads the bilayer. The Extracellular segment spans residues 267–275 (AVDPPRVGP). Residues 276–287 (LVPDWLFVMSYF) traverse the membrane as a helical segment.

This sequence belongs to the G-protein coupled receptor 1 family.

The protein localises to the cell membrane. In terms of biological role, high affinity receptor for melatonin. The activity of this receptor is mediated by pertussis toxin sensitive G proteins that inhibits adenylate cyclase activity. This is Melatonin receptor type 1B-A (mtnr1ba) from Danio rerio (Zebrafish).